Consider the following 153-residue polypeptide: Probable histone H2A.4 (153 aa).

Residues 1-12 (MDSGTKVKKGAA) show a composition bias toward basic residues. 2 disordered regions span residues 1–30 (MDSG…RSVK) and 129–153 (KSEK…PKKS). Residues 133–147 (AASTTKTPKSPSKAT) are compositionally biased toward low complexity. An SPKK motif motif is present at residues 149 to 152 (SPKK).

Belongs to the histone H2A family. In terms of assembly, the nucleosome is a histone octamer containing two molecules each of H2A, H2B, H3 and H4 assembled in one H3-H4 heterotetramer and two H2A-H2B heterodimers. The octamer wraps approximately 147 bp of DNA. In terms of processing, not ubiquitinated.

It localises to the nucleus. It is found in the chromosome. In terms of biological role, core component of nucleosome. Nucleosomes wrap and compact DNA into chromatin, limiting DNA accessibility to the cellular machineries which require DNA as a template. Histones thereby play a central role in transcription regulation, DNA repair, DNA replication and chromosomal stability. DNA accessibility is regulated via a complex set of post-translational modifications of histones, also called histone code, and nucleosome remodeling. This chain is Probable histone H2A.4, found in Arabidopsis thaliana (Mouse-ear cress).